We begin with the raw amino-acid sequence, 235 residues long: 15,16-dihydrobiliverdin:ferredoxin oxidoreductase (235 aa).

The protein belongs to the HY2 family.

The enzyme catalyses 15,16-dihydrobiliverdin + oxidized 2[4Fe-4S]-[ferredoxin] = biliverdin IXalpha + reduced 2[4Fe-4S]-[ferredoxin] + 2 H(+). In terms of biological role, catalyzes the two-electron reduction of biliverdin IX-alpha at the C15 methine bridge. This chain is 15,16-dihydrobiliverdin:ferredoxin oxidoreductase (pebA), found in Parasynechococcus marenigrum (strain WH8102).